Here is an 864-residue protein sequence, read N- to C-terminus: Structure-specific endonuclease subunit SLX4 (864 aa).

Disordered stretches follow at residues Met1–Pro21, Leu49–Gly69, Thr91–Ala113, Ala161–His190, Leu289–Lys318, Thr346–Pro385, Ala413–Ser433, and Lys625–Ser767. Positions Ser295 to Ser306 are enriched in polar residues. Residues Lys307–Lys318 are compositionally biased toward basic residues. Positions Gln656–Val668 are enriched in polar residues. Positions Val685 to Lys695 are enriched in low complexity. Polar residues predominate over residues Pro743–Ser767.

It belongs to the SLX4 family. Forms a heterodimer with SLX1. In terms of processing, phosphorylated in response to DNA damage.

The protein localises to the nucleus. Its function is as follows. Regulatory subunit of the SLX1-SLX4 structure-specific endonuclease that resolves DNA secondary structures generated during DNA repair and recombination. Has endonuclease activity towards branched DNA substrates, introducing single-strand cuts in duplex DNA close to junctions with ss-DNA. This chain is Structure-specific endonuclease subunit SLX4, found in Paracoccidioides lutzii (strain ATCC MYA-826 / Pb01) (Paracoccidioides brasiliensis).